The sequence spans 274 residues: Putative septum site-determining protein MinD (274 aa).

22 to 29 (KGGVGKTT) is an ATP binding site.

It belongs to the ParA family. MinD subfamily.

The protein resides in the plastid. It is found in the chloroplast. ATPase required for the correct placement of the division site. This is Putative septum site-determining protein MinD (minD-A) from Nephroselmis olivacea (Green alga).